The following is a 321-amino-acid chain: L-lactate dehydrogenase (321 aa).

NAD(+) contacts are provided by residues V19, D40, K45, Y71, and 85–86 (GA). Residues Q88, R94, and 126-129 (NPVD) each bind substrate. NAD(+) is bound by residues 124 to 126 (ATN) and S149. Residue 154-157 (DTAR) coordinates substrate. The beta-D-fructose 1,6-bisphosphate site is built by R159 and H174. Residue H181 is the Proton acceptor of the active site. Y226 bears the Phosphotyrosine mark. T235 is a substrate binding site.

The protein belongs to the LDH/MDH superfamily. LDH family. In terms of assembly, homotetramer.

The protein resides in the cytoplasm. It carries out the reaction (S)-lactate + NAD(+) = pyruvate + NADH + H(+). It functions in the pathway fermentation; pyruvate fermentation to lactate; (S)-lactate from pyruvate: step 1/1. Its activity is regulated as follows. Allosterically activated by fructose 1,6-bisphosphate (FBP). Catalyzes the conversion of lactate to pyruvate. In Oceanobacillus iheyensis (strain DSM 14371 / CIP 107618 / JCM 11309 / KCTC 3954 / HTE831), this protein is L-lactate dehydrogenase.